The following is a 197-amino-acid chain: Imidazoleglycerol-phosphate dehydratase (197 aa).

Belongs to the imidazoleglycerol-phosphate dehydratase family.

Its subcellular location is the cytoplasm. The catalysed reaction is D-erythro-1-(imidazol-4-yl)glycerol 3-phosphate = 3-(imidazol-4-yl)-2-oxopropyl phosphate + H2O. It participates in amino-acid biosynthesis; L-histidine biosynthesis; L-histidine from 5-phospho-alpha-D-ribose 1-diphosphate: step 6/9. This Pseudomonas syringae pv. syringae (strain B728a) protein is Imidazoleglycerol-phosphate dehydratase.